The primary structure comprises 261 residues: uncharacterized protein (261 aa).

A signal peptide spans 1 to 22 (MIHSKKLTLGICLVLLIILIGG). C23 carries N-palmitoyl cysteine lipidation. C23 is lipidated: S-diacylglycerol cysteine.

It belongs to the staphylococcal tandem lipoprotein family.

It localises to the cell membrane. This is an uncharacterized protein from Staphylococcus aureus (strain USA300).